The primary structure comprises 382 residues: S-adenosylmethionine synthase (382 aa).

His16 contributes to the ATP binding site. Mg(2+) is bound at residue Asp18. Glu44 provides a ligand contact to K(+). L-methionine contacts are provided by Glu57 and Gln100. The interval 100 to 110 is flexible loop; sequence QSPDIAQGVDN. ATP-binding positions include 165–167, 231–232, Asp240, 246–247, and Lys267; these read DAK, RF, and RK. Asp240 contributes to the L-methionine binding site. Lys271 serves as a coordination point for L-methionine.

The protein belongs to the AdoMet synthase family. Homotetramer; dimer of dimers. It depends on Mg(2+) as a cofactor. The cofactor is K(+).

The protein resides in the cytoplasm. It carries out the reaction L-methionine + ATP + H2O = S-adenosyl-L-methionine + phosphate + diphosphate. The protein operates within amino-acid biosynthesis; S-adenosyl-L-methionine biosynthesis; S-adenosyl-L-methionine from L-methionine: step 1/1. Its function is as follows. Catalyzes the formation of S-adenosylmethionine (AdoMet) from methionine and ATP. The overall synthetic reaction is composed of two sequential steps, AdoMet formation and the subsequent tripolyphosphate hydrolysis which occurs prior to release of AdoMet from the enzyme. The chain is S-adenosylmethionine synthase from Legionella pneumophila subsp. pneumophila (strain Philadelphia 1 / ATCC 33152 / DSM 7513).